The sequence spans 88 residues: Homeobox protein knotted-1-like 1 (88 aa).

The ELK domain maps to 4–24; sequence ELKLELKQGFKSRIEDVREEI. The segment at residues 25 to 88 is a DNA-binding region (homeobox; TALE-type); the sequence is LRKRRAGKLP…NQRKRNWHNN (64 aa).

It belongs to the TALE/KNOX homeobox family. Highly expressed in the roots.

It is found in the nucleus. This Zea mays (Maize) protein is Homeobox protein knotted-1-like 1 (KNOX1).